A 1284-amino-acid chain; its full sequence is Peroxisomal ATPase PEX1 (1284 aa).

The interval 339–373 is disordered; it reads SPKQQQDKSKQGVLLPDKEKQLSKSPDHKQISSNR. Residues 343–373 show a composition bias toward basic and acidic residues; sequence QQDKSKQGVLLPDKEKQLSKSPDHKQISSNR. ATP is bound by residues 600-607 and 882-889; these read GGKGSGKS and GPPGTGKT. A phosphoserine mark is found at serine 1182, serine 1210, and serine 1212. A disordered region spans residues 1261–1284; it reads FQNPKKRKNQSGTVFRTGQKVTLA. Residues 1270–1284 are compositionally biased toward polar residues; that stretch reads QSGTVFRTGQKVTLA.

Belongs to the AAA ATPase family. As to quaternary structure, homooligomer; homooligomerizes in the cytosol, interaction with PEX6 promotes dissociation of the homooligomer. Interacts with PEX6; forming the PEX1-PEX6 AAA ATPase complex, which is composed of a heterohexamer formed by a trimer of PEX1-PEX6 dimers. Interacts indirectly with PEX26, via its interaction with PEX6.

It is found in the cytoplasm. The protein localises to the cytosol. It localises to the peroxisome membrane. It carries out the reaction ATP + H2O = ADP + phosphate + H(+). Functionally, component of the PEX1-PEX6 AAA ATPase complex, a protein dislocase complex that mediates the ATP-dependent extraction of the PEX5 receptor from peroxisomal membranes, an essential step for PEX5 recycling. Specifically recognizes PEX5 monoubiquitinated at 'Cys-11', and pulls it out of the peroxisome lumen through the PEX2-PEX10-PEX12 retrotranslocation channel. Extraction by the PEX1-PEX6 AAA ATPase complex is accompanied by unfolding of the TPR repeats and release of bound cargo from PEX5. The sequence is that of Peroxisomal ATPase PEX1 from Mus musculus (Mouse).